A 125-amino-acid polypeptide reads, in one-letter code: Apolipoprotein C-IV (125 aa).

Residues 1–27 (MSLLRHSLQALPALCLCVLVLACIGAC) form the signal peptide.

This sequence belongs to the apolipoprotein C4 family.

The protein localises to the secreted. May participate in lipoprotein metabolism. The polypeptide is Apolipoprotein C-IV (APOC4) (Ateles geoffroyi (Black-handed spider monkey)).